A 287-amino-acid polypeptide reads, in one-letter code: D-alanine--D-alanine ligase (287 aa).

An ATP-grasp domain is found at 98-283; that stretch reads KTKQIAQSVG…FDDVVRITVE (186 aa). 124–169 lines the ATP pocket; it reads PVIIKPVDEGSSKGLFLCNNKEEAEEAVKKLAKPIIEDYIIGEELT. The Mg(2+) site is built by Asp-238, Glu-250, and Asn-252.

It belongs to the D-alanine--D-alanine ligase family. Mg(2+) is required as a cofactor. The cofactor is Mn(2+).

It localises to the cytoplasm. It catalyses the reaction 2 D-alanine + ATP = D-alanyl-D-alanine + ADP + phosphate + H(+). It participates in cell wall biogenesis; peptidoglycan biosynthesis. In terms of biological role, cell wall formation. The polypeptide is D-alanine--D-alanine ligase (Fusobacterium nucleatum subsp. nucleatum (strain ATCC 25586 / DSM 15643 / BCRC 10681 / CIP 101130 / JCM 8532 / KCTC 2640 / LMG 13131 / VPI 4355)).